The primary structure comprises 334 residues: Forkhead box protein N2 (334 aa).

Disordered regions lie at residues Met1–Thr52 and Ser83–Lys108. Residues Lys108–Ser204 constitute a DNA-binding region (fork-head).

Its subcellular location is the nucleus. The sequence is that of Forkhead box protein N2 from Xenopus tropicalis (Western clawed frog).